A 126-amino-acid chain; its full sequence is Histone H2B type 1-K (126 aa).

Over residues 1 to 12 (MPEPAKSAPAPK) the composition is skewed to low complexity. Residues 1–36 (MPEPAKSAPAPKKGSKKAVTKAQKKDGKKRKRSRKE) are disordered. Proline 2 is modified (N-acetylproline). The residue at position 3 (glutamate 3) is an ADP-ribosyl glutamic acid. Lysine 6 is modified (N6-(2-hydroxyisobutyryl)lysine; alternate). Lysine 6 is subject to N6-(beta-hydroxybutyryl)lysine; alternate. The residue at position 6 (lysine 6) is an N6-acetyllysine; alternate. Lysine 6 is modified (N6-butyryllysine; alternate). Lysine 6 is subject to N6-crotonyllysine; alternate. Lysine 6 is subject to N6-lactoyllysine; alternate. Lysine 6 is covalently cross-linked (Glycyl lysine isopeptide (Lys-Gly) (interchain with G-Cter in SUMO2); alternate). Serine 7 bears the ADP-ribosylserine mark. At lysine 12 the chain carries N6-(beta-hydroxybutyryl)lysine; alternate. N6-acetyllysine; alternate is present on residues lysine 12 and lysine 13. N6-crotonyllysine; alternate occurs at positions 12 and 13. An N6-lactoyllysine; alternate modification is found at lysine 12. An N6-(2-hydroxyisobutyryl)lysine; alternate modification is found at lysine 13. Phosphoserine; by STK4/MST1 is present on serine 15. 4 positions are modified to N6-acetyllysine; alternate: lysine 16, lysine 17, lysine 21, and lysine 24. Lysine 16, lysine 17, lysine 21, and lysine 24 each carry N6-crotonyllysine; alternate. An N6-lactoyllysine; alternate mark is found at lysine 16, lysine 17, lysine 21, and lysine 24. An N6-glutaryllysine; alternate modification is found at lysine 17. 2 positions are modified to N6-(2-hydroxyisobutyryl)lysine; alternate: lysine 21 and lysine 24. At lysine 21 the chain carries N6-(beta-hydroxybutyryl)lysine; alternate. Lysine 21 carries the N6-butyryllysine; alternate modification. Residue lysine 21 forms a Glycyl lysine isopeptide (Lys-Gly) (interchain with G-Cter in SUMO2); alternate linkage. Lysine 25 is modified (N6-(2-hydroxyisobutyryl)lysine). The residue at position 35 (lysine 35) is an N6-(2-hydroxyisobutyryl)lysine; alternate. N6-(beta-hydroxybutyryl)lysine; alternate is present on lysine 35. Lysine 35 is modified (N6-crotonyllysine; alternate). Lysine 35 carries the N6-glutaryllysine; alternate modification. The residue at position 35 (lysine 35) is an N6-succinyllysine; alternate. Residue lysine 35 forms a Glycyl lysine isopeptide (Lys-Gly) (interchain with G-Cter in ubiquitin); alternate linkage. Glutamate 36 is modified (polyADP-ribosyl glutamic acid). At serine 37 the chain carries Phosphoserine; by AMPK. 3 positions are modified to N6-(2-hydroxyisobutyryl)lysine; alternate: lysine 44, lysine 47, and lysine 58. Residue lysine 44 is modified to N6-lactoyllysine; alternate. An N6-glutaryllysine; alternate mark is found at lysine 44 and lysine 47. At lysine 47 the chain carries N6-methyllysine; alternate. Position 58 is an N6,N6-dimethyllysine; alternate (lysine 58). Arginine 80 carries the post-translational modification Dimethylated arginine. Residue lysine 86 is modified to N6-(2-hydroxyisobutyryl)lysine; alternate. Lysine 86 bears the N6-acetyllysine; alternate mark. Position 86 is an N6-lactoyllysine; alternate (lysine 86). N6,N6,N6-trimethyllysine; alternate is present on lysine 86. Omega-N-methylarginine is present on residues arginine 87 and arginine 93. Lysine 109 is modified (N6-(2-hydroxyisobutyryl)lysine; alternate). Position 109 is an N6-(beta-hydroxybutyryl)lysine; alternate (lysine 109). N6-lactoyllysine; alternate is present on lysine 109. N6-glutaryllysine; alternate is present on lysine 109. Lysine 109 carries the N6-methyllysine; alternate modification. The O-linked (GlcNAc) serine glycan is linked to serine 113. Threonine 116 carries the post-translational modification Phosphothreonine. Residues lysine 117 and lysine 121 each carry the N6-(2-hydroxyisobutyryl)lysine; alternate modification. Residue lysine 117 is modified to N6-(beta-hydroxybutyryl)lysine; alternate. Lysine 117 and lysine 121 each carry N6-lactoyllysine; alternate. N6-glutaryllysine; alternate occurs at positions 117 and 121. Lysine 117 and lysine 121 each carry N6-succinyllysine; alternate. The residue at position 117 (lysine 117) is an N6-methylated lysine; alternate. A Glycyl lysine isopeptide (Lys-Gly) (interchain with G-Cter in ubiquitin); alternate cross-link involves residue lysine 121.

The protein belongs to the histone H2B family. The nucleosome is a histone octamer containing two molecules each of H2A, H2B, H3 and H4 assembled in one H3-H4 heterotetramer and two H2A-H2B heterodimers. The octamer wraps approximately 147 bp of DNA. In terms of processing, monoubiquitination at Lys-35 (H2BK34Ub) by the MSL1/MSL2 dimer is required for histone H3 'Lys-4' (H3K4me) and 'Lys-79' (H3K79me) methylation and transcription activation at specific gene loci, such as HOXA9 and MEIS1 loci. Similarly, monoubiquitination at Lys-121 (H2BK120Ub) by the RNF20/40 complex gives a specific tag for epigenetic transcriptional activation and is also prerequisite for histone H3 'Lys-4' and 'Lys-79' methylation. It also functions cooperatively with the FACT dimer to stimulate elongation by RNA polymerase II. H2BK120Ub also acts as a regulator of mRNA splicing: deubiquitination by USP49 is required for efficient cotranscriptional splicing of a large set of exons. Post-translationally, phosphorylated on Ser-15 (H2BS14ph) by STK4/MST1 during apoptosis; which facilitates apoptotic chromatin condensation. Also phosphorylated on Ser-15 in response to DNA double strand breaks (DSBs), and in correlation with somatic hypermutation and immunoglobulin class-switch recombination. Phosphorylation at Ser-37 (H2BS36ph) by AMPK in response to stress promotes transcription. GlcNAcylation at Ser-113 promotes monoubiquitination of Lys-121. It fluctuates in response to extracellular glucose, and associates with transcribed genes. In terms of processing, ADP-ribosylated by PARP1 or PARP2 on Ser-7 (H2BS6ADPr) in response to DNA damage. H2BS6ADPr promotes recruitment of CHD1L. Mono-ADP-ribosylated on Glu-3 (H2BE2ADPr) by PARP3 in response to single-strand breaks. Poly ADP-ribosylation on Glu-36 (H2BE35ADPr) by PARP1 regulates adipogenesis: it inhibits phosphorylation at Ser-37 (H2BS36ph), thereby blocking expression of pro-adipogenetic genes. Post-translationally, crotonylation (Kcr) is specifically present in male germ cells and marks testis-specific genes in post-meiotic cells, including X-linked genes that escape sex chromosome inactivation in haploid cells. Crotonylation marks active promoters and enhancers and confers resistance to transcriptional repressors. It is also associated with post-meiotically activated genes on autosomes. Hydroxybutyrylation of histones is induced by starvation. In terms of processing, lactylated in macrophages by EP300/P300 by using lactoyl-CoA directly derived from endogenous or exogenous lactate, leading to stimulates gene transcription.

The protein resides in the nucleus. The protein localises to the chromosome. Functionally, core component of nucleosome. Nucleosomes wrap and compact DNA into chromatin, limiting DNA accessibility to the cellular machineries which require DNA as a template. Histones thereby play a central role in transcription regulation, DNA repair, DNA replication and chromosomal stability. DNA accessibility is regulated via a complex set of post-translational modifications of histones, also called histone code, and nucleosome remodeling. This chain is Histone H2B type 1-K, found in Mus musculus (Mouse).